We begin with the raw amino-acid sequence, 387 residues long: Succinate--CoA ligase [ADP-forming] subunit beta (387 aa).

The 228-residue stretch at 9 to 236 folds into the ATP-grasp domain; it reads KELFAKHNVP…RDATDPLELK (228 aa). Residues Lys-45, 52-54, Ser-94, and Glu-99 contribute to the ATP site; that span reads GRG. The Mg(2+) site is built by Asn-191 and Asp-205. Substrate-binding positions include Asn-256 and 318–320; that span reads GIT.

This sequence belongs to the succinate/malate CoA ligase beta subunit family. Heterotetramer of two alpha and two beta subunits. The cofactor is Mg(2+).

It catalyses the reaction succinate + ATP + CoA = succinyl-CoA + ADP + phosphate. The enzyme catalyses GTP + succinate + CoA = succinyl-CoA + GDP + phosphate. The protein operates within carbohydrate metabolism; tricarboxylic acid cycle; succinate from succinyl-CoA (ligase route): step 1/1. Functionally, succinyl-CoA synthetase functions in the citric acid cycle (TCA), coupling the hydrolysis of succinyl-CoA to the synthesis of either ATP or GTP and thus represents the only step of substrate-level phosphorylation in the TCA. The beta subunit provides nucleotide specificity of the enzyme and binds the substrate succinate, while the binding sites for coenzyme A and phosphate are found in the alpha subunit. This chain is Succinate--CoA ligase [ADP-forming] subunit beta, found in Mycobacterium sp. (strain JLS).